The chain runs to 93 residues: Putative hemolysin E-like protein (93 aa).

The protein belongs to the hemolysin E family.

The sequence is that of Putative hemolysin E-like protein from Escherichia coli O6:H1 (strain CFT073 / ATCC 700928 / UPEC).